The chain runs to 700 residues: Suprabasin (700 aa).

Residues 1-23 form the signal peptide; sequence MYLVSLLSSCCLLVLLGTLPARA. Disordered regions lie at residues 133–158, 183–258, and 283–391; these read QGGS…VANK, HAFG…VADK, and HAFG…GAHH. Residues 488–546 adopt a coiled-coil conformation; the sequence is KEAEKVAHGVQNGVNQAQKEAEKVAHGVQNGVNQAQKEAEKVAHGVQNGVNQAQKEAEK. The segment covering 641–654 has biased composition (polar residues); that stretch reads GVNQPSKEANQLLN. Residues 641 to 669 form a disordered region; the sequence is GVNQPSKEANQLLNGSHQGQGGYGGQHGG. Residues 658–668 are compositionally biased toward gly residues; the sequence is QGQGGYGGQHG.

Detected in epidermis, in suprabasal keratinocytes. Detected in suprabasal layers of embryonic epidermis and in stratified layers of embryonic tongue and palate. Detected in adult stomach.

Its subcellular location is the secreted. The sequence is that of Suprabasin (Sbsn) from Mus musculus (Mouse).